The chain runs to 196 residues: Peptidyl-tRNA hydrolase (196 aa).

Residue Tyr-14 participates in tRNA binding. Residue His-19 is the Proton acceptor of the active site. TRNA-binding residues include Tyr-64, Asn-66, and Asn-112.

It belongs to the PTH family. As to quaternary structure, monomer.

The protein resides in the cytoplasm. The enzyme catalyses an N-acyl-L-alpha-aminoacyl-tRNA + H2O = an N-acyl-L-amino acid + a tRNA + H(+). In terms of biological role, hydrolyzes ribosome-free peptidyl-tRNAs (with 1 or more amino acids incorporated), which drop off the ribosome during protein synthesis, or as a result of ribosome stalling. Catalyzes the release of premature peptidyl moieties from peptidyl-tRNA molecules trapped in stalled 50S ribosomal subunits, and thus maintains levels of free tRNAs and 50S ribosomes. This is Peptidyl-tRNA hydrolase from Methylocella silvestris (strain DSM 15510 / CIP 108128 / LMG 27833 / NCIMB 13906 / BL2).